A 259-amino-acid chain; its full sequence is tRNA-cytidine(32) 2-sulfurtransferase (259 aa).

Positions 37–42 match the PP-loop motif motif; that stretch reads SGGKDS. Positions 112, 115, and 202 each coordinate [4Fe-4S] cluster.

The protein belongs to the TtcA family. As to quaternary structure, homodimer. Mg(2+) serves as cofactor. [4Fe-4S] cluster is required as a cofactor.

The protein localises to the cytoplasm. It carries out the reaction cytidine(32) in tRNA + S-sulfanyl-L-cysteinyl-[cysteine desulfurase] + AH2 + ATP = 2-thiocytidine(32) in tRNA + L-cysteinyl-[cysteine desulfurase] + A + AMP + diphosphate + H(+). The protein operates within tRNA modification. Its function is as follows. Catalyzes the ATP-dependent 2-thiolation of cytidine in position 32 of tRNA, to form 2-thiocytidine (s(2)C32). The sulfur atoms are provided by the cysteine/cysteine desulfurase (IscS) system. The polypeptide is tRNA-cytidine(32) 2-sulfurtransferase (Syntrophotalea carbinolica (strain DSM 2380 / NBRC 103641 / GraBd1) (Pelobacter carbinolicus)).